The following is a 301-amino-acid chain: Pantothenate synthetase (301 aa).

30–37 is a binding site for ATP; sequence MGNLHEGH. H37 functions as the Proton donor in the catalytic mechanism. Q61 is a binding site for (R)-pantoate. Q61 contributes to the beta-alanine binding site. 149-152 provides a ligand contact to ATP; that stretch reads GEKD. Position 155 (Q155) interacts with (R)-pantoate. ATP contacts are provided by residues V178 and 186-189; that span reads MSSR.

It belongs to the pantothenate synthetase family. In terms of assembly, homodimer.

The protein localises to the cytoplasm. The enzyme catalyses (R)-pantoate + beta-alanine + ATP = (R)-pantothenate + AMP + diphosphate + H(+). The protein operates within cofactor biosynthesis; (R)-pantothenate biosynthesis; (R)-pantothenate from (R)-pantoate and beta-alanine: step 1/1. Functionally, catalyzes the condensation of pantoate with beta-alanine in an ATP-dependent reaction via a pantoyl-adenylate intermediate. The sequence is that of Pantothenate synthetase from Vibrio vulnificus (strain YJ016).